Here is a 428-residue protein sequence, read N- to C-terminus: Tryptophan synthase beta chain (428 aa).

Lys92 carries the post-translational modification N6-(pyridoxal phosphate)lysine.

Belongs to the TrpB family. Tetramer of two alpha and two beta chains. It depends on pyridoxal 5'-phosphate as a cofactor.

It carries out the reaction (1S,2R)-1-C-(indol-3-yl)glycerol 3-phosphate + L-serine = D-glyceraldehyde 3-phosphate + L-tryptophan + H2O. It functions in the pathway amino-acid biosynthesis; L-tryptophan biosynthesis; L-tryptophan from chorismate: step 5/5. In terms of biological role, the beta subunit is responsible for the synthesis of L-tryptophan from indole and L-serine. This chain is Tryptophan synthase beta chain, found in Leptothrix cholodnii (strain ATCC 51168 / LMG 8142 / SP-6) (Leptothrix discophora (strain SP-6)).